The following is a 315-amino-acid chain: Putative methyltransferase NSUN5C (315 aa).

S-adenosyl-L-methionine is bound by residues 50–56 (VPPQAIK), aspartate 74, arginine 79, and aspartate 121. The Nucleophile role is filled by cysteine 175. The interval 245 to 269 (TSASQAKASAPERTPSPAPKRKKRA) is disordered.

It belongs to the class I-like SAM-binding methyltransferase superfamily. RsmB/NOP family. As to expression, ubiquitous.

May have S-adenosyl-L-methionine-dependent methyl-transferase activity. The polypeptide is Putative methyltransferase NSUN5C (NSUN5P2) (Homo sapiens (Human)).